Consider the following 336-residue polypeptide: Ribosomal RNA large subunit methyltransferase F (336 aa).

The span at 212–231 (HHLERSRGKPTGKGVRRVRS) shows a compositional bias: basic residues. A disordered region spans residues 212 to 234 (HHLERSRGKPTGKGVRRVRSGRM).

The protein belongs to the methyltransferase superfamily. METTL16/RlmF family.

It is found in the cytoplasm. The catalysed reaction is adenosine(1618) in 23S rRNA + S-adenosyl-L-methionine = N(6)-methyladenosine(1618) in 23S rRNA + S-adenosyl-L-homocysteine + H(+). In terms of biological role, specifically methylates the adenine in position 1618 of 23S rRNA. This chain is Ribosomal RNA large subunit methyltransferase F, found in Methylobacillus flagellatus (strain ATCC 51484 / DSM 6875 / VKM B-1610 / KT).